Consider the following 499-residue polypeptide: MEKYILSIDQGTTSSRAILFNKEGEIKGVSQREFKQHFPHPGWVEHDANEIWTSVLSVMAELLNENNINANQIEGIGITNQRETTVVWDKNTGRPIYHAIVWQSRQTQDICTNLKEQGYEETFREKTGLLLDPYFAGTKVKWILDHVEGAREKAENGDLLFGTIDSWLVWKLSGRTAHITDYTNASRTLMFNIYDLKWDDELLELLNIPKQMLPEVKESSEIYGKTIDYHFFGQEVPIAGIAGDQQAALFGQACFDRGDVKNTYGTGGFMLMNTGEEAVKSESGLLTTIAYGLDGKVNYALEGSIFVSGSAIQWLRDGLRMINSAPQTENYASRVESTEGVYMVPAFVGLGTPYWDSEARGAIFGLSRGTEKEHFIRATLESLCYQTRDVMEAMSKDSGIEVQNLRVDGGAVKNNFIMQFQADIVNSSVERPEIQETTALGAAYLAGLAVGFWDDKEDIRERWKLQTEFKPEMDEDQRHKLYSGWKKAVKATQVFKLED.

Thr-12 is an ADP binding site. Residues Thr-12, Thr-13, and Ser-14 each contribute to the ATP site. Thr-12 serves as a coordination point for sn-glycerol 3-phosphate. Arg-16 is an ADP binding site. The sn-glycerol 3-phosphate site is built by Arg-82, Glu-83, and Tyr-134. Residues Arg-82, Glu-83, and Tyr-134 each contribute to the glycerol site. His-230 is modified (phosphohistidine; by HPr). Asp-244 provides a ligand contact to sn-glycerol 3-phosphate. Residues Asp-244 and Gln-245 each contribute to the glycerol site. ADP is bound by residues Thr-266 and Gly-309. ATP contacts are provided by Thr-266, Gly-309, Gln-313, and Gly-410. ADP contacts are provided by Gly-410 and Asn-414.

Belongs to the FGGY kinase family. As to quaternary structure, homotetramer and homodimer (in equilibrium). In terms of processing, the phosphoenolpyruvate-dependent sugar phosphotransferase system (PTS), including enzyme I, and histidine-containing protein (HPr) are required for the phosphorylation, which leads to the activation of the enzyme.

It carries out the reaction glycerol + ATP = sn-glycerol 3-phosphate + ADP + H(+). It participates in polyol metabolism; glycerol degradation via glycerol kinase pathway; sn-glycerol 3-phosphate from glycerol: step 1/1. With respect to regulation, activated by phosphorylation and inhibited by fructose 1,6-bisphosphate (FBP). Key enzyme in the regulation of glycerol uptake and metabolism. Catalyzes the phosphorylation of glycerol to yield sn-glycerol 3-phosphate. This is Glycerol kinase from Staphylococcus epidermidis (strain ATCC 12228 / FDA PCI 1200).